A 206-amino-acid chain; its full sequence is Large ribosomal subunit protein uL4 (206 aa).

Belongs to the universal ribosomal protein uL4 family. Part of the 50S ribosomal subunit.

Functionally, one of the primary rRNA binding proteins, this protein initially binds near the 5'-end of the 23S rRNA. It is important during the early stages of 50S assembly. It makes multiple contacts with different domains of the 23S rRNA in the assembled 50S subunit and ribosome. Its function is as follows. Forms part of the polypeptide exit tunnel. In Nitrobacter hamburgensis (strain DSM 10229 / NCIMB 13809 / X14), this protein is Large ribosomal subunit protein uL4.